A 186-amino-acid polypeptide reads, in one-letter code: ATP synthase subunit delta (186 aa).

The protein belongs to the ATPase delta chain family. As to quaternary structure, F-type ATPases have 2 components, F(1) - the catalytic core - and F(0) - the membrane proton channel. F(1) has five subunits: alpha(3), beta(3), gamma(1), delta(1), epsilon(1). F(0) has three main subunits: a(1), b(2) and c(10-14). The alpha and beta chains form an alternating ring which encloses part of the gamma chain. F(1) is attached to F(0) by a central stalk formed by the gamma and epsilon chains, while a peripheral stalk is formed by the delta and b chains.

Its subcellular location is the cell inner membrane. Functionally, f(1)F(0) ATP synthase produces ATP from ADP in the presence of a proton or sodium gradient. F-type ATPases consist of two structural domains, F(1) containing the extramembraneous catalytic core and F(0) containing the membrane proton channel, linked together by a central stalk and a peripheral stalk. During catalysis, ATP synthesis in the catalytic domain of F(1) is coupled via a rotary mechanism of the central stalk subunits to proton translocation. In terms of biological role, this protein is part of the stalk that links CF(0) to CF(1). It either transmits conformational changes from CF(0) to CF(1) or is implicated in proton conduction. In Brucella abortus (strain S19), this protein is ATP synthase subunit delta.